We begin with the raw amino-acid sequence, 351 residues long: D-alanine--D-alanine ligase (351 aa).

The 209-residue stretch at 135–343 (NQIFLQSGQK…MEEVFSDLIE (209 aa)) folds into the ATP-grasp domain. Residue 167–222 (LETLGFPQFLKPVEGGSSVSVYKITNREQLKEKLALIFESDSKVMSQSFLTGIEVS) coordinates ATP. Asp298, Glu310, and Asn312 together coordinate Mg(2+).

It belongs to the D-alanine--D-alanine ligase family. It depends on Mg(2+) as a cofactor. The cofactor is Mn(2+).

The protein resides in the cytoplasm. It carries out the reaction 2 D-alanine + ATP = D-alanyl-D-alanine + ADP + phosphate + H(+). It functions in the pathway cell wall biogenesis; peptidoglycan biosynthesis. In terms of biological role, cell wall formation. This chain is D-alanine--D-alanine ligase, found in Leptospira interrogans serogroup Icterohaemorrhagiae serovar Lai (strain 56601).